We begin with the raw amino-acid sequence, 61 residues long: Photosystem II reaction center X protein (61 aa).

A helical membrane pass occupies residues I26 to F46.

The protein belongs to the PsbX family. Type 2 subfamily. In terms of assembly, PSII consists of a core antenna complex that captures photons, and an electron transfer chain that converts photonic excitation into a charge separation. PSII forms dimeric complexes.

It is found in the cellular thylakoid membrane. Functionally, involved in the binding and/or turnover of quinones at the Q(B) site of Photosystem II. The polypeptide is Photosystem II reaction center X protein (Prochlorococcus marinus (strain MIT 9312)).